Consider the following 124-residue polypeptide: Ribonuclease pancreatic (124 aa).

Residues 1–15 are compositionally biased toward basic and acidic residues; that stretch reads KESPAKKFQRQHMDP. A disordered region spans residues 1-24; sequence KESPAKKFQRQHMDPDSSSSNSSN. Substrate contacts are provided by Lys-7 and Arg-10. His-12 serves as the catalytic Proton acceptor. Residues Asn-21 and Asn-34 are each glycosylated (N-linked (GlcNAc...) asparagine). Intrachain disulfides connect Cys-26–Cys-84, Cys-40–Cys-95, Cys-58–Cys-110, and Cys-65–Cys-72. Substrate-binding positions include 41–45 and Lys-66; that span reads KPVNT. Asn-76 carries an N-linked (GlcNAc...) asparagine glycan. Arg-85 is a binding site for substrate. Catalysis depends on His-119, which acts as the Proton donor.

The protein belongs to the pancreatic ribonuclease family. In terms of assembly, monomer. Interacts with and forms tight 1:1 complexes with RNH1. Dimerization of two such complexes may occur. Interaction with RNH1 inhibits this protein. Pancreas.

Its subcellular location is the secreted. It carries out the reaction an [RNA] containing cytidine + H2O = an [RNA]-3'-cytidine-3'-phosphate + a 5'-hydroxy-ribonucleotide-3'-[RNA].. The enzyme catalyses an [RNA] containing uridine + H2O = an [RNA]-3'-uridine-3'-phosphate + a 5'-hydroxy-ribonucleotide-3'-[RNA].. In terms of biological role, endonuclease that catalyzes the cleavage of RNA on the 3' side of pyrimidine nucleotides. Acts on single-stranded and double-stranded RNA. The polypeptide is Ribonuclease pancreatic (RNASE1) (Sus scrofa (Pig)).